The following is a 175-amino-acid chain: Co-chaperone protein HscB homolog (175 aa).

The region spanning 8–80 is the J domain; the sequence is DFFSLFGLPR…LNRARYLLQL (73 aa).

It belongs to the HscB family. In terms of assembly, interacts with HscA and stimulates its ATPase activity.

Functionally, co-chaperone involved in the maturation of iron-sulfur cluster-containing proteins. Seems to help targeting proteins to be folded toward HscA. In Chromobacterium violaceum (strain ATCC 12472 / DSM 30191 / JCM 1249 / CCUG 213 / NBRC 12614 / NCIMB 9131 / NCTC 9757 / MK), this protein is Co-chaperone protein HscB homolog.